A 433-amino-acid chain; its full sequence is GTPase Der (433 aa).

EngA-type G domains follow at residues 5–167 (KKVL…GRVN) and 174–349 (IKVG…DQLE). GTP is bound by residues 11–18 (GRPNVGKS), 58–62 (DTGGF), 119–122 (NKVD), 180–187 (GKPNSGKS), 227–231 (DTAGI), and 292–295 (SKWD). A KH-like domain is found at 349–429 (ELKTNTPDLN…PILVELREKI (81 aa)).

This sequence belongs to the TRAFAC class TrmE-Era-EngA-EngB-Septin-like GTPase superfamily. EngA (Der) GTPase family. As to quaternary structure, associates with the 50S ribosomal subunit.

Its function is as follows. GTPase that plays an essential role in the late steps of ribosome biogenesis. The protein is GTPase Der of Borrelia garinii subsp. bavariensis (strain ATCC BAA-2496 / DSM 23469 / PBi) (Borreliella bavariensis).